The primary structure comprises 116 residues: Phosphoribosyl-AMP cyclohydrolase (116 aa).

Residue aspartate 78 participates in Mg(2+) binding. Cysteine 79 is a Zn(2+) binding site. Mg(2+) is bound by residues aspartate 80 and aspartate 82. Residues cysteine 95 and cysteine 102 each coordinate Zn(2+).

Belongs to the PRA-CH family. As to quaternary structure, homodimer. Mg(2+) is required as a cofactor. Requires Zn(2+) as cofactor.

Its subcellular location is the cytoplasm. It carries out the reaction 1-(5-phospho-beta-D-ribosyl)-5'-AMP + H2O = 1-(5-phospho-beta-D-ribosyl)-5-[(5-phospho-beta-D-ribosylamino)methylideneamino]imidazole-4-carboxamide. It participates in amino-acid biosynthesis; L-histidine biosynthesis; L-histidine from 5-phospho-alpha-D-ribose 1-diphosphate: step 3/9. Its function is as follows. Catalyzes the hydrolysis of the adenine ring of phosphoribosyl-AMP. The protein is Phosphoribosyl-AMP cyclohydrolase of Acidiphilium cryptum (strain JF-5).